The following is a 201-amino-acid chain: ADP-ribosylation factor-related protein 1 (201 aa).

An N-acetylmethionine modification is found at M1. GTP is bound by residues G24–T31, D75–Q79, and N134–D137.

This sequence belongs to the small GTPase superfamily. Arf family. In terms of assembly, interacts with SYS1.

The protein localises to the golgi apparatus. It is found in the trans-Golgi network. Trans-Golgi-associated GTPase that regulates protein sorting. Controls the targeting of ARL1 and its effector to the trans-Golgi. Required for the lipidation of chylomicrons in the intestine and required for VLDL lipidation in the liver. This is ADP-ribosylation factor-related protein 1 (ARFRP1) from Pongo abelii (Sumatran orangutan).